Reading from the N-terminus, the 307-residue chain is Oxygen-dependent coproporphyrinogen-III oxidase (307 aa).

Ser99 is a binding site for substrate. Residues His103 and His113 each coordinate a divalent metal cation. The Proton donor role is filled by His113. 115–117 (NVR) contacts substrate. His152 and His182 together coordinate a divalent metal cation. Residues 247–282 (YVEFNLVFDRGTLFGLQSGGRTESILMSMPPVVNWR) form an important for dimerization region. 265–267 (GGR) is a binding site for substrate.

Belongs to the aerobic coproporphyrinogen-III oxidase family. As to quaternary structure, homodimer. A divalent metal cation serves as cofactor.

The protein localises to the cytoplasm. The enzyme catalyses coproporphyrinogen III + O2 + 2 H(+) = protoporphyrinogen IX + 2 CO2 + 2 H2O. The protein operates within porphyrin-containing compound metabolism; protoporphyrin-IX biosynthesis; protoporphyrinogen-IX from coproporphyrinogen-III (O2 route): step 1/1. Its function is as follows. Involved in the heme biosynthesis. Catalyzes the aerobic oxidative decarboxylation of propionate groups of rings A and B of coproporphyrinogen-III to yield the vinyl groups in protoporphyrinogen-IX. This chain is Oxygen-dependent coproporphyrinogen-III oxidase, found in Paraburkholderia xenovorans (strain LB400).